Reading from the N-terminus, the 193-residue chain is Cerebellin-1 (193 aa).

The N-terminal stretch at 1–21 (MLGVLELLLLGAAWLAGPARG) is a signal peptide. Asparagine 23 is a glycosylation site (N-linked (GlcNAc...) asparagine). The essential for interaction with NRXN1 and linker of two C1q trimers into disulfide-linked hexamers stretch occupies residues 34–38 (CLVVC). Residues 57-193 (SGSAKVAFSA…TFSGFLVFPL (137 aa)) enclose the C1q domain. Positions 62 to 193 (VAFSAIRSTN…TFSGFLVFPL (132 aa)) are necessary for interaction with CBLN3, and homotrimerization. Asparagine 79 carries an N-linked (GlcNAc...) asparagine glycan. The interval 122–147 (YNRQTIQVSLMLNGWPVISAFAGDQD) is essential for interaction with GRID2.

In terms of assembly, homohexamer; disulfide-linked homotrimers. The trimers associate via N-terminal cysteine residues to form disulfide-linked hexamers. May form oligomers with CBLN2, CBLN3 AND CBLN4 prior to secretion. Once secreted, does not interact with other CBLN family members. Interacts with GRID1. Interacts with NRXN1 and NRXN2 long (alpha) and short (beta) isoforms produced by alternative promoter usage. Competes with NLGN1 for NRXN1-binding. Weakly interacts with NRXN3 short isoform and not at all with NRXN3 long isoform. Interacts (via C1q domain) with GRID2; GRID2-binding is calcium-independent; CBLN1 hexamers anchor GRID2 N-terminal domain dimers to monomeric NRXN1 isoform beta; promotes synaptogenesis and mediates the D-Serine-dependent long term depression signals and AMPA receptor endocytosis. Interacts with OTOL1. In terms of processing, the proteolytic processing to yield cerebellin seems to occur either prior to the secretion by presynaptic neurons and subsequent oligomerization or in some other location after release of the mature protein. Post-translationally, sialoglycoprotein. In terms of tissue distribution, in the Purkinje cells postsynaptic structures. In the cerebellum, cerebellin is much less abundant than [des-Ser1]-cerebellin.

It is found in the secreted. It localises to the postsynaptic cell membrane. In terms of biological role, required for synapse integrity and synaptic plasticity. During cerebellar synapse formation, essential for the matching and maintenance of pre- and post-synaptic elements at parallel fiber-Purkinje cell synapses, the establishment of the proper pattern of climbing fiber-Purkinje cell innervation, and induction of long-term depression at parallel fiber-Purkinje cell synapses. Plays a role as a synaptic organizer that acts bidirectionally on both pre- and post-synaptic components. On the one hand induces accumulation of synaptic vesicles in the pre-synaptic part by binding with NRXN1 and in other hand induces clustering of GRID2 and its associated proteins at the post-synaptic site through association of GRID2. NRXN1-CBLN1-GRID2 complex directly induces parallel fiber protrusions that encapsulate spines of Purkinje cells leading to accumulation of GRID2 and synaptic vesicles. Required for CBLN3 export from the endoplasmic reticulum and secretion. NRXN1-CBLN1-GRID2 complex mediates the D-Serine-dependent long term depression signals and AMPA receptor endocytosis. Essential for long-term maintenance but not establishment of excitatory synapses. Inhibits the formation and function of inhibitory GABAergic synapses in cerebellar Purkinje cells. The cerebellin peptide exerts neuromodulatory functions. Directly stimulates norepinephrine release via the adenylate cyclase/PKA-dependent signaling pathway; and indirectly enhances adrenocortical secretion in vivo, through a paracrine mechanism involving medullary catecholamine release. This is Cerebellin-1 (CBLN1) from Homo sapiens (Human).